Here is a 159-residue protein sequence, read N- to C-terminus: Cyclic pyranopterin monophosphate synthase (159 aa).

Residues 75-77 (LCH) and 113-114 (ME) contribute to the substrate site. Residue Asp-128 is part of the active site.

The protein belongs to the MoaC family. Homohexamer; trimer of dimers.

The enzyme catalyses (8S)-3',8-cyclo-7,8-dihydroguanosine 5'-triphosphate = cyclic pyranopterin phosphate + diphosphate. It functions in the pathway cofactor biosynthesis; molybdopterin biosynthesis. Catalyzes the conversion of (8S)-3',8-cyclo-7,8-dihydroguanosine 5'-triphosphate to cyclic pyranopterin monophosphate (cPMP). The polypeptide is Cyclic pyranopterin monophosphate synthase (Aliivibrio fischeri (strain MJ11) (Vibrio fischeri)).